Here is a 441-residue protein sequence, read N- to C-terminus: Proline--tRNA ligase (441 aa).

It belongs to the class-II aminoacyl-tRNA synthetase family. ProS type 2 subfamily. In terms of assembly, homodimer.

Its subcellular location is the cytoplasm. It carries out the reaction tRNA(Pro) + L-proline + ATP = L-prolyl-tRNA(Pro) + AMP + diphosphate. Functionally, catalyzes the attachment of proline to tRNA(Pro) in a two-step reaction: proline is first activated by ATP to form Pro-AMP and then transferred to the acceptor end of tRNA(Pro). In Bartonella bacilliformis (strain ATCC 35685 / KC583 / Herrer 020/F12,63), this protein is Proline--tRNA ligase.